The sequence spans 357 residues: Phospho-N-acetylmuramoyl-pentapeptide-transferase (357 aa).

Helical transmembrane passes span 23–43, 70–90, 91–111, 127–147, 171–191, 196–216, 236–256, 260–280, 286–306, and 334–354; these read AIFS…YFIY, TMGG…YCNL, SNIY…IGFI, LKWK…MIKI, YLYI…VNLT, GLAI…SLFS, LAIL…FNSY, VFMG…IAIL, LLII…LQII, and LIIV…LISL.

Belongs to the glycosyltransferase 4 family. MraY subfamily. The cofactor is Mg(2+).

It localises to the cell inner membrane. It carries out the reaction UDP-N-acetyl-alpha-D-muramoyl-L-alanyl-gamma-D-glutamyl-meso-2,6-diaminopimeloyl-D-alanyl-D-alanine + di-trans,octa-cis-undecaprenyl phosphate = di-trans,octa-cis-undecaprenyl diphospho-N-acetyl-alpha-D-muramoyl-L-alanyl-D-glutamyl-meso-2,6-diaminopimeloyl-D-alanyl-D-alanine + UMP. Its pathway is cell wall biogenesis; peptidoglycan biosynthesis. Its function is as follows. Catalyzes the initial step of the lipid cycle reactions in the biosynthesis of the cell wall peptidoglycan: transfers peptidoglycan precursor phospho-MurNAc-pentapeptide from UDP-MurNAc-pentapeptide onto the lipid carrier undecaprenyl phosphate, yielding undecaprenyl-pyrophosphoryl-MurNAc-pentapeptide, known as lipid I. The chain is Phospho-N-acetylmuramoyl-pentapeptide-transferase from Buchnera aphidicola subsp. Acyrthosiphon pisum (strain APS) (Acyrthosiphon pisum symbiotic bacterium).